A 168-amino-acid chain; its full sequence is Photosystem I assembly protein Ycf3 (168 aa).

TPR repeat units lie at residues 35–68 (AFTYYRDGMSAQSEGNYAEALQNYYEATRLEIDP), 72–105 (SYILYNIGLIHTSNGEHTKALEYYSRALERNPFL), and 120–153 (GEQAIRQGDSEIAEAWSDQAAEYWKQAIALTPGN).

The protein belongs to the Ycf3 family.

It localises to the plastid. It is found in the chloroplast thylakoid membrane. In terms of biological role, essential for the assembly of the photosystem I (PSI) complex. May act as a chaperone-like factor to guide the assembly of the PSI subunits. This chain is Photosystem I assembly protein Ycf3, found in Buxus microphylla (Littleleaf boxwood).